Reading from the N-terminus, the 596-residue chain is Membrane protein insertase YidC (596 aa).

The next 6 helical transmembrane spans lie at 4–24 (NKLI…HFFD), 332–352 (LGWP…FSFI), 359–379 (YGLV…PLSY), 425–445 (LSGC…FNFF), 468–488 (IINL…FTLL), and 518–538 (PITF…YYFV). The segment covering 565 to 584 (KNKEKSANNKEGSFKKRFQD) has biased composition (basic and acidic residues). Positions 565–596 (KNKEKSANNKEGSFKKRFQDAIKASASHKGKK) are disordered.

This sequence belongs to the OXA1/ALB3/YidC family. Type 1 subfamily. As to quaternary structure, interacts with the Sec translocase complex via SecD. Specifically interacts with transmembrane segments of nascent integral membrane proteins during membrane integration.

The protein localises to the cell inner membrane. Functionally, required for the insertion and/or proper folding and/or complex formation of integral membrane proteins into the membrane. Involved in integration of membrane proteins that insert both dependently and independently of the Sec translocase complex, as well as at least some lipoproteins. Aids folding of multispanning membrane proteins. In Amoebophilus asiaticus (strain 5a2), this protein is Membrane protein insertase YidC.